A 355-amino-acid polypeptide reads, in one-letter code: D-alanine--D-alanine ligase (355 aa).

The 208-residue stretch at 143 to 350 (KTIFSNLKIP…IEQLVAKLVD (208 aa)) folds into the ATP-grasp domain. 178 to 233 (LKKLNFPFFVKPSNSGSSLGISKVINESEILQSLEKAQKIDSRILVEEGLEVREIE) lines the ATP pocket. Mg(2+) is bound by residues aspartate 303, glutamate 317, and asparagine 319.

It belongs to the D-alanine--D-alanine ligase family. It depends on Mg(2+) as a cofactor. Mn(2+) serves as cofactor.

Its subcellular location is the cytoplasm. The enzyme catalyses 2 D-alanine + ATP = D-alanyl-D-alanine + ADP + phosphate + H(+). Its pathway is cell wall biogenesis; peptidoglycan biosynthesis. Its function is as follows. Cell wall formation. The protein is D-alanine--D-alanine ligase of Prochlorococcus marinus (strain MIT 9215).